A 152-amino-acid chain; its full sequence is Transcriptional regulator MraZ (152 aa).

SpoVT-AbrB domains lie at 5–52 (ANAI…PLNE) and 81–124 (ATES…DEDM).

Belongs to the MraZ family. As to quaternary structure, forms oligomers.

The protein localises to the cytoplasm. It localises to the nucleoid. The protein is Transcriptional regulator MraZ of Psychromonas ingrahamii (strain DSM 17664 / CCUG 51855 / 37).